A 357-amino-acid chain; its full sequence is Ribosomal RNA large subunit methyltransferase M (357 aa).

S-adenosyl-L-methionine-binding positions include serine 183, 216–219, aspartate 235, aspartate 255, and aspartate 271; that span reads APGG. The Proton acceptor role is filled by lysine 300.

The protein belongs to the class I-like SAM-binding methyltransferase superfamily. RNA methyltransferase RlmE family. RlmM subfamily. In terms of assembly, monomer.

The protein resides in the cytoplasm. It catalyses the reaction cytidine(2498) in 23S rRNA + S-adenosyl-L-methionine = 2'-O-methylcytidine(2498) in 23S rRNA + S-adenosyl-L-homocysteine + H(+). Functionally, catalyzes the 2'-O-methylation at nucleotide C2498 in 23S rRNA. In Pseudomonas syringae pv. syringae (strain B728a), this protein is Ribosomal RNA large subunit methyltransferase M.